Here is a 436-residue protein sequence, read N- to C-terminus: Trigger factor (436 aa).

A PPIase FKBP-type domain is found at 163-248 (GDRVTIDFEG…VKKIEAAHLP (86 aa)).

It belongs to the FKBP-type PPIase family. Tig subfamily.

It is found in the cytoplasm. It catalyses the reaction [protein]-peptidylproline (omega=180) = [protein]-peptidylproline (omega=0). In terms of biological role, involved in protein export. Acts as a chaperone by maintaining the newly synthesized protein in an open conformation. Functions as a peptidyl-prolyl cis-trans isomerase. This is Trigger factor from Polaromonas naphthalenivorans (strain CJ2).